A 576-amino-acid polypeptide reads, in one-letter code: Arginine--tRNA ligase (576 aa).

A 'HIGH' region motif is present at residues P122 to H132.

It belongs to the class-I aminoacyl-tRNA synthetase family. As to quaternary structure, monomer.

Its subcellular location is the cytoplasm. It carries out the reaction tRNA(Arg) + L-arginine + ATP = L-arginyl-tRNA(Arg) + AMP + diphosphate. The polypeptide is Arginine--tRNA ligase (Serratia proteamaculans (strain 568)).